The primary structure comprises 452 residues: Bifunctional protein GlmU (452 aa).

A pyrophosphorylase region spans residues 1 to 232 (MTSRTSLTIV…EDEVRGINTK (232 aa)). Residues 11 to 14 (LAAG), K25, Q78, and 83 to 84 (GT) contribute to the UDP-N-acetyl-alpha-D-glucosamine site. Residue D108 participates in Mg(2+) binding. Positions 144, 158, 173, and 230 each coordinate UDP-N-acetyl-alpha-D-glucosamine. A Mg(2+)-binding site is contributed by N230. Positions 233-253 (AQLAEAEAVMQARLRQAALDA) are linker. The tract at residues 254 to 452 (GVTMIAPETV…KTRGKTRPAK (199 aa)) is N-acetyltransferase. Positions 319 and 337 each coordinate UDP-N-acetyl-alpha-D-glucosamine. The active-site Proton acceptor is the H349. The UDP-N-acetyl-alpha-D-glucosamine site is built by Y352 and N363. Acetyl-CoA is bound by residues A366, 372–373 (NY), S391, S409, and R426.

The protein in the N-terminal section; belongs to the N-acetylglucosamine-1-phosphate uridyltransferase family. In the C-terminal section; belongs to the transferase hexapeptide repeat family. Homotrimer. Mg(2+) is required as a cofactor.

It localises to the cytoplasm. The enzyme catalyses alpha-D-glucosamine 1-phosphate + acetyl-CoA = N-acetyl-alpha-D-glucosamine 1-phosphate + CoA + H(+). The catalysed reaction is N-acetyl-alpha-D-glucosamine 1-phosphate + UTP + H(+) = UDP-N-acetyl-alpha-D-glucosamine + diphosphate. It functions in the pathway nucleotide-sugar biosynthesis; UDP-N-acetyl-alpha-D-glucosamine biosynthesis; N-acetyl-alpha-D-glucosamine 1-phosphate from alpha-D-glucosamine 6-phosphate (route II): step 2/2. The protein operates within nucleotide-sugar biosynthesis; UDP-N-acetyl-alpha-D-glucosamine biosynthesis; UDP-N-acetyl-alpha-D-glucosamine from N-acetyl-alpha-D-glucosamine 1-phosphate: step 1/1. Its pathway is bacterial outer membrane biogenesis; LPS lipid A biosynthesis. Its function is as follows. Catalyzes the last two sequential reactions in the de novo biosynthetic pathway for UDP-N-acetylglucosamine (UDP-GlcNAc). The C-terminal domain catalyzes the transfer of acetyl group from acetyl coenzyme A to glucosamine-1-phosphate (GlcN-1-P) to produce N-acetylglucosamine-1-phosphate (GlcNAc-1-P), which is converted into UDP-GlcNAc by the transfer of uridine 5-monophosphate (from uridine 5-triphosphate), a reaction catalyzed by the N-terminal domain. The chain is Bifunctional protein GlmU from Rhodopseudomonas palustris (strain BisA53).